Here is a 435-residue protein sequence, read N- to C-terminus: AP-2 complex subunit mu (435 aa).

Ser-45 carries the phosphoserine modification. Thr-156 bears the Phosphothreonine mark. The MHD domain maps to 170 to 434 (RNELFLDVLE…IGRSGIYETR (265 aa)). A 1,2-diacyl-sn-glycero-3-phospho-(1D-myo-inositol-3,4,5-trisphosphate) contacts are provided by Lys-341, Lys-345, and Lys-354.

Belongs to the adaptor complexes medium subunit family. Adaptor protein complex 2 (AP-2) is a heterotetramer composed of two large adaptins (alpha-type subunit AP2A1 or AP2A2 and beta-type subunit AP2B1), a medium adaptin (mu-type subunit AP2M1) and a small adaptin (sigma-type subunit AP2S1). Interacts with ATP6V1H and MEGF10. Interacts with EGFR. Interacts with PIP5K1C; tyrosine phosphorylation of PIP5K1C weakens the interaction. Interacts with KIAA0319; required for clathrin-mediated endocytosis of KIAA0319. Interacts with DVL2 (via DEP domain). Interacts with KCNQ1; mediates estrogen-induced internalization via clathrin-coated vesicles. Together with AP2A1 or AP2A2 and AP2B1, it interacts with ADAM10; this interaction facilitates ADAM10 endocytosis from the plasma membrane during long-term potentiation in hippocampal neurons. Probably interacts with ACE2 (via endocytic sorting signal motif); the interaction is inhibited by ACE2 phosphorylation. Interacts with RALBP1; the interaction is direct. Interacts with TMEM106B (via N-terminus). In terms of processing, phosphorylation at Thr-156 increases the affinity of the AP-2 complex for cargo membrane proteins during the initial stages of endocytosis.

It is found in the cell membrane. The protein resides in the membrane. The protein localises to the coated pit. Component of the adaptor protein complex 2 (AP-2). Adaptor protein complexes function in protein transport via transport vesicles in different membrane traffic pathways. Adaptor protein complexes are vesicle coat components and appear to be involved in cargo selection and vesicle formation. AP-2 is involved in clathrin-dependent endocytosis in which cargo proteins are incorporated into vesicles surrounded by clathrin (clathrin-coated vesicles, CCVs) which are destined for fusion with the early endosome. The clathrin lattice serves as a mechanical scaffold but is itself unable to bind directly to membrane components. Clathrin-associated adaptor protein (AP) complexes which can bind directly to both the clathrin lattice and to the lipid and protein components of membranes are considered to be the major clathrin adaptors contributing the CCV formation. AP-2 also serves as a cargo receptor to selectively sort the membrane proteins involved in receptor-mediated endocytosis. AP-2 seems to play a role in the recycling of synaptic vesicle membranes from the presynaptic surface. AP-2 recognizes Y-X-X-[FILMV] (Y-X-X-Phi) and [ED]-X-X-X-L-[LI] endocytosis signal motifs within the cytosolic tails of transmembrane cargo molecules. AP-2 may also play a role in maintaining normal post-endocytic trafficking through the ARF6-regulated, non-clathrin pathway. During long-term potentiation in hippocampal neurons, AP-2 is responsible for the endocytosis of ADAM10. The AP-2 mu subunit binds to transmembrane cargo proteins; it recognizes the Y-X-X-Phi motifs. The surface region interacting with to the Y-X-X-Phi motif is inaccessible in cytosolic AP-2, but becomes accessible through a conformational change following phosphorylation of AP-2 mu subunit at Thr-156 in membrane-associated AP-2. The membrane-specific phosphorylation event appears to involve assembled clathrin which activates the AP-2 mu kinase AAK1. Plays a role in endocytosis of frizzled family members upon Wnt signaling. This chain is AP-2 complex subunit mu (AP2M1), found in Pongo abelii (Sumatran orangutan).